Here is a 252-residue protein sequence, read N- to C-terminus: Phosphoglycolate phosphatase (252 aa).

Residue D13 is the Nucleophile of the active site. D13, D15, and D192 together coordinate Mg(2+).

Belongs to the HAD-like hydrolase superfamily. CbbY/CbbZ/Gph/YieH family. In terms of assembly, monomer. Requires Mg(2+) as cofactor. The cofactor is chloride.

It catalyses the reaction 2-phosphoglycolate + H2O = glycolate + phosphate. Its pathway is organic acid metabolism; glycolate biosynthesis; glycolate from 2-phosphoglycolate: step 1/1. Specifically catalyzes the dephosphorylation of 2-phosphoglycolate. Is involved in the dissimilation of the intracellular 2-phosphoglycolate formed during the DNA repair of 3'-phosphoglycolate ends, a major class of DNA lesions induced by oxidative stress. In Salmonella choleraesuis (strain SC-B67), this protein is Phosphoglycolate phosphatase.